The primary structure comprises 396 residues: Maltose/maltodextrin-binding periplasmic protein (396 aa).

The signal sequence occupies residues Met1–Ala26.

It belongs to the bacterial solute-binding protein 1 family. In terms of assembly, the complex is composed of two ATP-binding proteins (MalK), two transmembrane proteins (MalG and MalF) and a solute-binding protein (MalE).

The protein localises to the periplasm. Part of the ABC transporter complex MalEFGK involved in maltose/maltodextrin import. Binds maltose and higher maltodextrins. This Escherichia coli O157:H7 protein is Maltose/maltodextrin-binding periplasmic protein (malE).